A 315-amino-acid chain; its full sequence is MSFAAHTKKELTMMEGADCCSKAELSALIRMNGSLQFGAGRLVLDVTTENAAIARRIYTLIKRLFQIHAELLVRKKMRLKKNNVYIVRIPNKANEILQDLGIMDQSLSFIPGIAPEIVKKSCCRAAYLRGAFLAGGSVNHPEASSYHLEIFTSYQDFCEALTKIANRYKLNAKCIERKKGYVLYIKEGEKITEFLSLIGAHQALLYFEDVRIVKDMRNSVNRLHNCEIANINKTVNAATRQMENIQLIDQEMGLENLPKRLREVAELRVAHPDINLKELGEMVPSGVVSKSGINHRLRKINEIADKIREKQNISM.

The segment at residues 275 to 309 (NLKELGEMVPSGVVSKSGINHRLRKINEIADKIRE) is a DNA-binding region (H-T-H motif).

Belongs to the WhiA family.

Its function is as follows. Involved in cell division and chromosome segregation. The protein is Probable cell division protein WhiA of Brevibacillus brevis (strain 47 / JCM 6285 / NBRC 100599).